The sequence spans 127 residues: Small ribosomal subunit protein uS13 (127 aa).

This sequence belongs to the universal ribosomal protein uS13 family. In terms of assembly, part of the 30S ribosomal subunit. Forms a loose heterodimer with protein S19. Forms two bridges to the 50S subunit in the 70S ribosome.

Located at the top of the head of the 30S subunit, it contacts several helices of the 16S rRNA. In the 70S ribosome it contacts the 23S rRNA (bridge B1a) and protein L5 of the 50S subunit (bridge B1b), connecting the 2 subunits; these bridges are implicated in subunit movement. Contacts the tRNAs in the A and P-sites. The sequence is that of Small ribosomal subunit protein uS13 from Pelagibacter ubique (strain HTCC1062).